The following is a 71-amino-acid chain: Exodeoxyribonuclease 7 small subunit (71 aa).

The protein belongs to the XseB family. Heterooligomer composed of large and small subunits.

The protein localises to the cytoplasm. It catalyses the reaction Exonucleolytic cleavage in either 5'- to 3'- or 3'- to 5'-direction to yield nucleoside 5'-phosphates.. Functionally, bidirectionally degrades single-stranded DNA into large acid-insoluble oligonucleotides, which are then degraded further into small acid-soluble oligonucleotides. The sequence is that of Exodeoxyribonuclease 7 small subunit from Clostridium botulinum (strain Kyoto / Type A2).